The chain runs to 41 residues: MTRNVVRQEFEAPGKPQDSSQQDACLILVKGNWTTNEMEVK.

The segment covering 1–12 has biased composition (basic and acidic residues); that stretch reads MTRNVVRQEFEA. The segment at 1–23 is disordered; it reads MTRNVVRQEFEAPGKPQDSSQQD.

This is an uncharacterized protein from Homo sapiens (Human).